The primary structure comprises 237 residues: Ribosomal RNA small subunit methyltransferase G (237 aa).

S-adenosyl-L-methionine contacts are provided by residues glycine 79, 130-131, and arginine 147; that span reads CE.

Belongs to the methyltransferase superfamily. RNA methyltransferase RsmG family.

The protein localises to the cytoplasm. Its function is as follows. Specifically methylates the N7 position of a guanine in 16S rRNA. The chain is Ribosomal RNA small subunit methyltransferase G from Malacoplasma penetrans (strain HF-2) (Mycoplasma penetrans).